Reading from the N-terminus, the 294-residue chain is Urease accessory protein UreD 1 (294 aa).

The disordered stretch occupies residues methionine 1–valine 22. Over residues lysine 11–proline 21 the composition is skewed to pro residues.

This sequence belongs to the UreD family. UreD, UreF and UreG form a complex that acts as a GTP-hydrolysis-dependent molecular chaperone, activating the urease apoprotein by helping to assemble the nickel containing metallocenter of UreC. The UreE protein probably delivers the nickel.

It localises to the cytoplasm. Its function is as follows. Required for maturation of urease via the functional incorporation of the urease nickel metallocenter. The sequence is that of Urease accessory protein UreD 1 from Methylorubrum extorquens (strain PA1) (Methylobacterium extorquens).